The sequence spans 438 residues: Protein ROOT INITIATION DEFECTIVE 3 (438 aa).

WD repeat units follow at residues 36-74 (AHGL…AEVK), 76-115 (YPVE…LLKK), 118-157 (GHYR…DDFQ), 171-212 (EHTM…LLKN), 214-253 (IFPS…EYGT), and 261-300 (EKGK…HVRT). Residues 394-434 (AATEMEMERLKLEYKRSLQMNEQWQKNYENLLQVVMEEEQI) adopt a coiled-coil conformation.

In terms of biological role, involved in meristem development. Acts as a negative regulator of the CUC-STM pathway in shoot apical meristem (SAM) neo-formation. The protein is Protein ROOT INITIATION DEFECTIVE 3 (RID3) of Arabidopsis thaliana (Mouse-ear cress).